A 492-amino-acid chain; its full sequence is Cytochrome P450 2B12 (492 aa).

The residue at position 129 (Ser-129) is a Phosphoserine. Cys-437 is a heme binding site.

The protein belongs to the cytochrome P450 family. It depends on heme as a cofactor. In terms of tissue distribution, preputial gland, but not in liver.

The protein localises to the endoplasmic reticulum membrane. It localises to the microsome membrane. The catalysed reaction is an organic molecule + reduced [NADPH--hemoprotein reductase] + O2 = an alcohol + oxidized [NADPH--hemoprotein reductase] + H2O + H(+). Cytochromes P450 are a group of heme-thiolate monooxygenases. In liver microsomes, this enzyme is involved in an NADPH-dependent electron transport pathway. This isozyme seems responsible for metabolism of 2,2',4,4',5,5'-hexachlorobiphenyl. In Rattus norvegicus (Rat), this protein is Cytochrome P450 2B12 (Cyp2b12).